The primary structure comprises 568 residues: Sulfite reductase [NADPH] hemoprotein beta-component (568 aa).

[4Fe-4S] cluster contacts are provided by C426, C432, C471, and C475. C475 contributes to the siroheme binding site.

This sequence belongs to the nitrite and sulfite reductase 4Fe-4S domain family. In terms of assembly, alpha(8)-beta(8). The alpha component is a flavoprotein, the beta component is a hemoprotein. Siroheme is required as a cofactor. The cofactor is [4Fe-4S] cluster.

It carries out the reaction hydrogen sulfide + 3 NADP(+) + 3 H2O = sulfite + 3 NADPH + 4 H(+). Its pathway is sulfur metabolism; hydrogen sulfide biosynthesis; hydrogen sulfide from sulfite (NADPH route): step 1/1. Functionally, component of the sulfite reductase complex that catalyzes the 6-electron reduction of sulfite to sulfide. This is one of several activities required for the biosynthesis of L-cysteine from sulfate. The protein is Sulfite reductase [NADPH] hemoprotein beta-component of Xylella fastidiosa (strain 9a5c).